Consider the following 54-residue polypeptide: Ovomucoid (54 aa).

Positions 4 to 54 (VDCSEYPKPVCSLEYMPLCGSDSQTYSNECNFCNAVVDSNGTLTLSHFGKC) constitute a Kazal-like domain. 3 disulfide bridges follow: C6/C36, C14/C33, and C22/C54. N-linked (GlcNAc...) asparagine glycosylation occurs at N43.

Its subcellular location is the secreted. The protein is Ovomucoid of Caracara plancus (Southern caracara).